The following is a 55-amino-acid chain: ATP synthase protein 8 (55 aa).

A helical transmembrane segment spans residues 7 to 24 (NPWFFIMIISWLTYSMII). Positions 34-55 (TNPPARKEPTTNTTTPWNWPWT) are disordered. Residues 43–55 (TTNTTTPWNWPWT) show a composition bias toward low complexity.

Belongs to the ATPase protein 8 family. As to quaternary structure, F-type ATPases have 2 components, CF(1) - the catalytic core - and CF(0) - the membrane proton channel.

It is found in the mitochondrion membrane. Functionally, mitochondrial membrane ATP synthase (F(1)F(0) ATP synthase or Complex V) produces ATP from ADP in the presence of a proton gradient across the membrane which is generated by electron transport complexes of the respiratory chain. F-type ATPases consist of two structural domains, F(1) - containing the extramembraneous catalytic core and F(0) - containing the membrane proton channel, linked together by a central stalk and a peripheral stalk. During catalysis, ATP synthesis in the catalytic domain of F(1) is coupled via a rotary mechanism of the central stalk subunits to proton translocation. Part of the complex F(0) domain. Minor subunit located with subunit a in the membrane. The chain is ATP synthase protein 8 (MT-ATP8) from Vireo altiloquus (Black-whiskered vireo).